The primary structure comprises 367 residues: Outer membrane protein P2 (367 aa).

A signal peptide spans 1–20 (MKKTLAALIVGAFAASAANA).

This sequence belongs to the Gram-negative porin family. As to quaternary structure, homotrimer.

The protein resides in the cell outer membrane. Its function is as follows. Forms pores that allow passive diffusion of small molecules across the outer membrane. This is Outer membrane protein P2 (ompP2) from Haemophilus influenzae.